A 305-amino-acid polypeptide reads, in one-letter code: Acetylglutamate kinase (305 aa).

Substrate contacts are provided by residues 67–68 (GG), Arg-89, and Asn-190.

Belongs to the acetylglutamate kinase family. ArgB subfamily.

It localises to the cytoplasm. It carries out the reaction N-acetyl-L-glutamate + ATP = N-acetyl-L-glutamyl 5-phosphate + ADP. The protein operates within amino-acid biosynthesis; L-arginine biosynthesis; N(2)-acetyl-L-ornithine from L-glutamate: step 2/4. Functionally, catalyzes the ATP-dependent phosphorylation of N-acetyl-L-glutamate. This chain is Acetylglutamate kinase, found in Bifidobacterium longum (strain NCC 2705).